The primary structure comprises 36 residues: MISDEQLNSLAITFGIVMMTLIVIYHAVDSTMSPKN.

Topologically, residues 1–9 (MISDEQLNS) are lumenal. Residues 10–28 (LAITFGIVMMTLIVIYHAV) traverse the membrane as a helical segment. The Cytoplasmic segment spans residues 29 to 36 (DSTMSPKN).

This sequence belongs to the OST4 family. In terms of assembly, component of the oligosaccharyltransferase (OST) complex, which appears to exist in two assemblies comprising OST1, OST2, OST4, OST5, STT3, SWP1, WPB1, and either OST3 or OST6. OST assembly occurs through the formation of 3 subcomplexes. Subcomplex 1 contains OST1 and OST5, subcomplex 2 contains STT3, OST3, and OST4, and subcomplex 3 contains OST2, WBP1, and SWP1. Interacts with SEC61, SBH1 and SSS1.

It localises to the endoplasmic reticulum membrane. It participates in protein modification; protein glycosylation. In terms of biological role, subunit of the oligosaccharyl transferase (OST) complex that catalyzes the initial transfer of a defined glycan (Glc(3)Man(9)GlcNAc(2) in eukaryotes) from the lipid carrier dolichol-pyrophosphate to an asparagine residue within an Asn-X-Ser/Thr consensus motif in nascent polypeptide chains, the first step in protein N-glycosylation. N-glycosylation occurs cotranslationally and the complex associates with the Sec61 complex at the channel-forming translocon complex that mediates protein translocation across the endoplasmic reticulum (ER). All subunits are required for a maximal enzyme activity. The polypeptide is Dolichyl-diphosphooligosaccharide--protein glycosyltransferase subunit OST4 (OST4) (Saccharomyces cerevisiae (strain ATCC 204508 / S288c) (Baker's yeast)).